An 86-amino-acid polypeptide reads, in one-letter code: Mu-theraphotoxin-Hhn1b 1 (86 aa).

An N-terminal signal peptide occupies residues 1–21 (MKASMFLALAGLALLFVVCYA). Positions 22–49 (SESEEKEFSNELLSSVLAVDDNSKGEER) are excised as a propeptide. Intrachain disulfides connect Cys51/Cys66, Cys58/Cys73, and Cys65/Cys80. The residue at position 84 (Ile84) is an Isoleucine amide.

This sequence belongs to the neurotoxin 10 (Hwtx-1) family. 22 (Htx-4) subfamily. In terms of assembly, monomer. In terms of tissue distribution, expressed by the venom gland.

It is found in the secreted. Functionally, neurotoxin that selectively inhibits neuronal tetrodotoxin-sensitive voltage-gated sodium channels (Nav) (IC(50)=44.6 nM). It is active on Nav1.2/SCN2A (IC(50)=22.4 nM), Nav1.6/SCN8A (IC(50)=50.1 nM) and Nav1.7/SCN9A (IC(50)=48.9 nM). It shows low affinity for lipid bilayers. In Cyriopagopus hainanus (Chinese bird spider), this protein is Mu-theraphotoxin-Hhn1b 1.